The following is a 265-amino-acid chain: UPF0026 protein slr1464 (265 aa).

The Radical SAM core domain maps to 16-252 (RYGRSLGIDP…QNLAKKISGA (237 aa)). [4Fe-4S] cluster is bound by residues C32, C36, and C39. The tract at residues 204 to 230 (RPTRPKPLQRELEGRGNHTGTPYGDRP) is disordered.

The protein belongs to the UPF0026 family. The cofactor is [4Fe-4S] cluster.

This chain is UPF0026 protein slr1464, found in Synechocystis sp. (strain ATCC 27184 / PCC 6803 / Kazusa).